The following is a 91-amino-acid chain: Small ribosomal subunit protein uS19 (91 aa).

It belongs to the universal ribosomal protein uS19 family.

Functionally, protein S19 forms a complex with S13 that binds strongly to the 16S ribosomal RNA. The protein is Small ribosomal subunit protein uS19 of Synechococcus elongatus (strain ATCC 33912 / PCC 7942 / FACHB-805) (Anacystis nidulans R2).